Reading from the N-terminus, the 283-residue chain is Short-chain dehydrogenase anuB (283 aa).

The NADP(+) site is built by threonine 57, aspartate 78, asparagine 106, tyrosine 166, lysine 170, valine 199, and threonine 201. Catalysis depends on tyrosine 166, which acts as the Proton acceptor. Tyrosine 166 serves as the catalytic Proton donor. Lysine 170 functions as the Lowers pKa of active site Tyr in the catalytic mechanism.

It belongs to the short-chain dehydrogenases/reductases (SDR) family.

It participates in secondary metabolite biosynthesis. In terms of biological role, highly reducing polyketide synthase; part of the gene cluster that mediates the biosynthesis of annullatin D, an alkylated aromatic polyketide with a fused dihydrobenzofuran lactone ring system that exhibits potent agonistic activities toward the cannabinoid receptors. The annullatin backbone 2-hydroxymethyl-3-pentylphenol is assembled from one acetyl-CoA starter unit and 5 malonyl-CoA elongation units by cooperation of the highly reducing polyketide synthase anuA, the short-chain dehydrogenase anuB and the oxidoreductase anuC, before being hydroxylated at the C-5 alkyl chain by the cytochrome P450 monooxygenase anuE to form (8S)-annullatin E. The prenyltransferase anuH subsequently installs one isoprenyl group at the benzene ring to form (8S)-annullatin J. Enzymatic or nonenzymatic dihydro-benzofuran ring formation between the prenyl and the phenolic hydroxyl groups in (8S)-annullatin J results in two diastereomers (2S,9S)-annullatin H and compound 12. The intermediate (2S,9S)-annullatin H is then converted to (2S,9S)-annullatin D by the FAD-linked oxidoreductase anuG-catalyzed five-member lactone ring formation. The isomer 12 acts as a substrate for the short-chain dehydrogenase anuF and is oxidized to (2R)-annullatin F, which is subsequently acetylated by an acetyltransferase leading to (2R)-annullatin G formation. The remaining enzymes identified within the cluster, anuD, anuI and anuJ, seem not to be involved in annullatin biosynthesis. This Penicillium roqueforti (strain FM164) protein is Short-chain dehydrogenase anuB.